Reading from the N-terminus, the 388-residue chain is Succinate--CoA ligase [ADP-forming] subunit beta (388 aa).

An ATP-grasp domain is found at 9–244 (KSLFAEYGLP…PSQDDAREAH (236 aa)). Residues Lys-46, 53 to 55 (GRG), Glu-99, Thr-102, and Glu-107 each bind ATP. Mg(2+) contacts are provided by Asn-199 and Asp-213. Residues Asn-264 and 321 to 323 (GIV) contribute to the substrate site.

Belongs to the succinate/malate CoA ligase beta subunit family. Heterotetramer of two alpha and two beta subunits. The cofactor is Mg(2+).

The enzyme catalyses succinate + ATP + CoA = succinyl-CoA + ADP + phosphate. It carries out the reaction GTP + succinate + CoA = succinyl-CoA + GDP + phosphate. It participates in carbohydrate metabolism; tricarboxylic acid cycle; succinate from succinyl-CoA (ligase route): step 1/1. In terms of biological role, succinyl-CoA synthetase functions in the citric acid cycle (TCA), coupling the hydrolysis of succinyl-CoA to the synthesis of either ATP or GTP and thus represents the only step of substrate-level phosphorylation in the TCA. The beta subunit provides nucleotide specificity of the enzyme and binds the substrate succinate, while the binding sites for coenzyme A and phosphate are found in the alpha subunit. This chain is Succinate--CoA ligase [ADP-forming] subunit beta, found in Shewanella oneidensis (strain ATCC 700550 / JCM 31522 / CIP 106686 / LMG 19005 / NCIMB 14063 / MR-1).